The primary structure comprises 305 residues: tRNA uridine(34) hydroxylase (305 aa).

Residues 125-219 enclose the Rhodanese domain; the sequence is ADENTVVVDT…YLEEVPREQS (95 aa). Cys-179 functions as the Cysteine persulfide intermediate in the catalytic mechanism.

The protein belongs to the TrhO family.

The catalysed reaction is uridine(34) in tRNA + AH2 + O2 = 5-hydroxyuridine(34) in tRNA + A + H2O. In terms of biological role, catalyzes oxygen-dependent 5-hydroxyuridine (ho5U) modification at position 34 in tRNAs. The sequence is that of tRNA uridine(34) hydroxylase from Brucella suis (strain ATCC 23445 / NCTC 10510).